The sequence spans 275 residues: MKNTIQTFKNAKYEGKKLSMLTAYDYSIAKIMDECDINGILIGDSLGMVIKGEENTLSVTIDEIIYHTKAVKNGVKNALIVSDMPFLSYHVSIEDAVKNAGRLIKEGGAHAVKLEGGSNVIKQIESIVNAQIPVMGHLGLTPQSVNSFGGFKVQGNTSETARQLIEDAKLIEKAGAFSIVLEGVPTKIAEMVTNSISIPTIGIGAGINCDGQILVYQDMLGMFGDFVPKFVKQYANIGDIMKDSIKNYILEVNTGAFPQEKHSFSINESELEKLY.

Mg(2+) contacts are provided by D44 and D83. 3-methyl-2-oxobutanoate-binding positions include D44 to S45, D83, and K113. Residue E115 participates in Mg(2+) binding. Residue E182 is the Proton acceptor of the active site.

It belongs to the PanB family. Homodecamer; pentamer of dimers. The cofactor is Mg(2+).

It is found in the cytoplasm. The catalysed reaction is 3-methyl-2-oxobutanoate + (6R)-5,10-methylene-5,6,7,8-tetrahydrofolate + H2O = 2-dehydropantoate + (6S)-5,6,7,8-tetrahydrofolate. Its pathway is cofactor biosynthesis; (R)-pantothenate biosynthesis; (R)-pantoate from 3-methyl-2-oxobutanoate: step 1/2. Its function is as follows. Catalyzes the reversible reaction in which hydroxymethyl group from 5,10-methylenetetrahydrofolate is transferred onto alpha-ketoisovalerate to form ketopantoate. In Clostridioides difficile (strain 630) (Peptoclostridium difficile), this protein is 3-methyl-2-oxobutanoate hydroxymethyltransferase.